We begin with the raw amino-acid sequence, 208 residues long: Glutathione S-transferase GstB (208 aa).

The 83-residue stretch at 1-83 folds into the GST N-terminal domain; that stretch reads MITLWGRNNS…YLAAQYGQKR (83 aa). Glutathione is bound by residues asparagine 12, asparagine 39, valine 53, and 67–68; that span reads ES. The GST C-terminal domain maps to 88–208; that stretch reads SPARRAEAEK…VRKVVMIPVS (121 aa).

Belongs to the GST superfamily.

The catalysed reaction is RX + glutathione = an S-substituted glutathione + a halide anion + H(+). Its function is as follows. Conjugation of reduced glutathione to a wide number of exogenous and endogenous hydrophobic electrophiles. The protein is Glutathione S-transferase GstB (gstB) of Escherichia coli O6:H1 (strain CFT073 / ATCC 700928 / UPEC).